The following is a 112-amino-acid chain: uncharacterized protein (112 aa).

To U.parvum UU089.1.

This is an uncharacterized protein from Synechocystis sp. (strain ATCC 27184 / PCC 6803 / Kazusa).